A 221-amino-acid polypeptide reads, in one-letter code: uncharacterized protein (221 aa).

It to E.coli YheO.

This is an uncharacterized protein from Haemophilus influenzae (strain ATCC 51907 / DSM 11121 / KW20 / Rd).